A 373-amino-acid polypeptide reads, in one-letter code: MLKRKPSNVSEKEKHQKPKRSSSFGNFDRFRNNSLSKPDDSTEAHEGDPTNGSGEQSKTSNNGGGLGKKMRAISWTMKKKVGKKYIKALSEEKDEEDGENAHPYRNSDPVIGTHTEKVSLKASDSMDSLYSGQSSSSGITSCSDGTSNRDSFRLDDDGPYSGPFCGRARVHTDFTPSPYDTDSLKIKKGDIIDIICKTPMGMWTGMLNNKVGNFKFIYVDVISEEEAAPKKIKANRRSNSKKSKTLQEFLERIHLQEYTSTLLLNGYETLEDLKDIKESHLIELNIENPDDRRRLLSAAENFLEEEIIQEQENEPEPLSLSSDISLNKSQLDDCPRDSGCYISSGNSDNGKEDLESENLSDMVHKIIITEPSD.

Residues 1–72 (MLKRKPSNVS…GGGLGKKMRA (72 aa)) are disordered. An Important for interaction with 14-3-3 proteins motif is present at residues 20 to 25 (RSSSFG). A phosphoserine mark is found at Ser23 and Ser34. The segment covering 37–48 (KPDDSTEAHEGD) has biased composition (basic and acidic residues). Polar residues predominate over residues 50 to 61 (TNGSGEQSKTSN). Position 74 is a phosphoserine (Ser74). Thr76 is subject to Phosphothreonine. Phosphoserine occurs at positions 90 and 119. Residues 91-153 (EEKDEEDGEN…DGTSNRDSFR (63 aa)) are disordered. A compositionally biased stretch (low complexity) spans 123–146 (SDSMDSLYSGQSSSSGITSCSDGT). The residue at position 160 (Tyr160) is a Phosphotyrosine. One can recognise an SH3 domain in the interval 163–224 (PFCGRARVHT…KFIYVDVISE (62 aa)). An SAM domain is found at 241–305 (KKSKTLQEFL…LSAAENFLEE (65 aa)). The interval 337–359 (DSGCYISSGNSDNGKEDLESENL) is disordered.

In terms of assembly, interacts with FASLG. Interacts with phosphotyrosine containing proteins. Interacts (via SH3 domain) with CTTN. Interacts (phosphorylated at Ser-23) with YWHAB, YWHAE, YWHAG, YWHAH, YWHAZ and SFN. Interacts directly with SAP30 and HDAC1. Identified in a complex with SAP30 and HDAC1. Detected in peripheral blood B-cells (at protein level). Detected in spleen, liver and peripheral blood.

It localises to the nucleus. It is found in the cytoplasm. The protein resides in the cell projection. The protein localises to the ruffle. Functionally, negative regulator of B-cell activation. Down-regulates cell proliferation (in vitro). Promotes RAC1-dependent membrane ruffle formation and reorganization of the actin cytoskeleton. Regulates cell spreading and cell polarization. Stimulates HDAC1 activity. Regulates LYN activity by modulating its tyrosine phosphorylation. This Homo sapiens (Human) protein is SAM domain-containing protein SAMSN-1 (SAMSN1).